The chain runs to 638 residues: Threonine--tRNA ligase 2 (638 aa).

Positions 1-64 (MSKHVHIQLP…EEDAELSIVT (64 aa)) constitute a TGS domain. A catalytic region spans residues 245–535 (DHRKLGKQLG…LIEHYGGAFP (291 aa)). Zn(2+)-binding residues include Cys-336, His-387, and His-512.

This sequence belongs to the class-II aminoacyl-tRNA synthetase family. Homodimer. Zn(2+) is required as a cofactor.

The protein resides in the cytoplasm. The catalysed reaction is tRNA(Thr) + L-threonine + ATP = L-threonyl-tRNA(Thr) + AMP + diphosphate + H(+). Functionally, catalyzes the attachment of threonine to tRNA(Thr) in a two-step reaction: L-threonine is first activated by ATP to form Thr-AMP and then transferred to the acceptor end of tRNA(Thr). Also edits incorrectly charged L-seryl-tRNA(Thr). In Bacillus subtilis (strain 168), this protein is Threonine--tRNA ligase 2 (thrZ).